Consider the following 122-residue polypeptide: Small ribosomal subunit protein uS13 (122 aa).

A disordered region spans residues 99 to 122 (RGQRTHTNARTRKGPAKAIAGKKK).

This sequence belongs to the universal ribosomal protein uS13 family. As to quaternary structure, part of the 30S ribosomal subunit. Forms a loose heterodimer with protein S19. Forms two bridges to the 50S subunit in the 70S ribosome.

Located at the top of the head of the 30S subunit, it contacts several helices of the 16S rRNA. In the 70S ribosome it contacts the 23S rRNA (bridge B1a) and protein L5 of the 50S subunit (bridge B1b), connecting the 2 subunits; these bridges are implicated in subunit movement. Contacts the tRNAs in the A and P-sites. The polypeptide is Small ribosomal subunit protein uS13 (Allorhizobium ampelinum (strain ATCC BAA-846 / DSM 112012 / S4) (Agrobacterium vitis (strain S4))).